The primary structure comprises 159 residues: 17 kDa surface antigen (159 aa).

Residues 1–19 (MKLLSKIMIIALAASMLQA) form the signal peptide. C20 carries N-palmitoyl cysteine lipidation. C20 is lipidated: S-diacylglycerol cysteine.

It belongs to the rickettsiale 17 kDa surface antigen family.

It is found in the cell outer membrane. This Rickettsia felis (strain ATCC VR-1525 / URRWXCal2) (Rickettsia azadi) protein is 17 kDa surface antigen (omp).